A 283-amino-acid polypeptide reads, in one-letter code: Alpha-ketoglutarate-dependent taurine dioxygenase (283 aa).

Histidine 70, tyrosine 73, and asparagine 95 together coordinate taurine. 2 residues coordinate Fe cation: histidine 99 and aspartate 101. Valine 102 lines the taurine pocket. Threonine 126 is a binding site for 2-oxoglutarate. 3-hydroxytryptophan; by autocatalysis occurs at positions 128, 240, and 248. Residue histidine 255 coordinates Fe cation. Positions 255, 266, and 270 each coordinate 2-oxoglutarate. Residue arginine 270 participates in taurine binding.

It belongs to the TfdA dioxygenase family. As to quaternary structure, homodimer. Was later shown to be a homotetramer arranged as a dimer of two dimers. Fe(2+) serves as cofactor.

It carries out the reaction taurine + 2-oxoglutarate + O2 = aminoacetaldehyde + sulfite + succinate + CO2 + H(+). It functions in the pathway organosulfur degradation; taurine degradation via aerobic pathway; aminoacetaldehyde and sulfite from taurine: step 1/1. Activated by ascorbate and inhibited by divalent metal ions such as zinc, copper and cobalt. Its function is as follows. Catalyzes the alpha-ketoglutarate-dependent hydroxylation of taurine yielding sulfite and aminoacetaldehyde after decomposition of an unstable intermediate. Is required for the utilization of taurine (2-aminoethanesulfonate) as an alternative sulfur source for growth in the absence of sulfate. To a lesser extent, pentanesulfonate, 3-(N-morpholino)propanesulfonate and 1,3-dioxo-2-isoindolineethanesulfonate are also desulfonated by this enzyme in vitro; however, desulfonation by TauD of organosulfonates other than taurine seem to be of little or no importance for sulfur metabolism in vivo. In Escherichia coli (strain K12), this protein is Alpha-ketoglutarate-dependent taurine dioxygenase (tauD).